The sequence spans 181 residues: Inner membrane-spanning protein YciB (181 aa).

A run of 5 helical transmembrane segments spans residues 8–28 (FPIICFFVAYKFWGIYIATAA), 53–73 (ITLIFILLLGSFTLVFHNAIF), 76–96 (WKPTIVYWIFAIVLFGSHFFG), 121–141 (LSWALFFLILGVLNLFVVYNF), and 149–169 (FKLFGTLALMLVFILGQAFYI).

This sequence belongs to the YciB family.

It localises to the cell inner membrane. Functionally, plays a role in cell envelope biogenesis, maintenance of cell envelope integrity and membrane homeostasis. The sequence is that of Inner membrane-spanning protein YciB from Coxiella burnetii (strain CbuK_Q154) (Coxiella burnetii (strain Q154)).